A 164-amino-acid chain; its full sequence is Small ribosomal subunit protein uS5 (164 aa).

The region spanning 10 to 73 (LEERVVAINR…EAAKKNLIEV (64 aa)) is the S5 DRBM domain.

This sequence belongs to the universal ribosomal protein uS5 family. As to quaternary structure, part of the 30S ribosomal subunit. Contacts proteins S4 and S8.

In terms of biological role, with S4 and S12 plays an important role in translational accuracy. Its function is as follows. Located at the back of the 30S subunit body where it stabilizes the conformation of the head with respect to the body. The sequence is that of Small ribosomal subunit protein uS5 from Streptococcus thermophilus (strain CNRZ 1066).